We begin with the raw amino-acid sequence, 252 residues long: Indole-3-glycerol phosphate synthase (252 aa).

This sequence belongs to the TrpC family.

It carries out the reaction 1-(2-carboxyphenylamino)-1-deoxy-D-ribulose 5-phosphate + H(+) = (1S,2R)-1-C-(indol-3-yl)glycerol 3-phosphate + CO2 + H2O. It participates in amino-acid biosynthesis; L-tryptophan biosynthesis; L-tryptophan from chorismate: step 4/5. This chain is Indole-3-glycerol phosphate synthase, found in Listeria monocytogenes serotype 4b (strain CLIP80459).